The primary structure comprises 2389 residues: Highly reducing polyketide synthase Dhc3 (2389 aa).

Positions 9 to 433 (DVPIAVVGLA…GTNGHAVLES (425 aa)) constitute a Ketosynthase family 3 (KS3) domain. Residues Cys181, His316, and His356 each act as for beta-ketoacyl synthase activity in the active site. The malonyl-CoA:ACP transacylase (MAT) domain stretch occupies residues 551–861 (FVFTGQGAQW…LSGPVEQILN (311 aa)). Ser641 acts as the For malonyltransferase activity in catalysis. The segment at 944–1079 (RSLIGAQVPM…GLITIDYADT (136 aa)) is N-terminal hotdog fold. The PKS/mFAS DH domain maps to 944-1263 (RSLIGAQVPM…VSELENDTEA (320 aa)). A dehydratase (DH) domain region spans residues 946 to 1262 (LIGAQVPMMD…RVSELENDTE (317 aa)). Residue His976 is the Proton acceptor; for dehydratase activity of the active site. The C-terminal hotdog fold stretch occupies residues 1107 to 1263 (PDICSKEDFY…VSELENDTEA (157 aa)). Catalysis depends on Asp1173, which acts as the Proton donor; for dehydratase activity. The segment at 1673 to 1987 (GLLDTLAFIE…QGKHRGKLVL (315 aa)) is enoylreductase (ER) domain. Positions 2011–2191 (ATYLFVGGLG…VAVDLGIMRD (181 aa)) are catalytic ketoreductase (KRc) domain. Residues 2302 to 2379 (EAVSIITDAL…EFAEKIAEKS (78 aa)) enclose the Carrier domain. At Ser2339 the chain carries O-(pantetheine 4'-phosphoryl)serine.

It functions in the pathway mycotoxin biosynthesis. In terms of biological role, highly reducing polyketide synthase; part of the gene cluster that mediates the biosynthesis of 10,11-dehydrocurvularin, a prevalent fungal phytotoxin with heat shock response and immune-modulatory activities. The highly reducing polyketide synthase Dhc3 is responsible for biosynthesis up to the tetraketide stage. The non-reducing polyketide synthase Dhc5 then conducts four additional chain extension cycles, producing the unreduced part of the nascent octaketide from C-1 to C-8 in 10,11-dehydrocurvularin. This is Highly reducing polyketide synthase Dhc3 (Dhc3) from Alternaria cinerariae.